The following is a 650-amino-acid chain: Zinc finger CCCH domain-containing protein 55 (650 aa).

The interval 67–162 is disordered; sequence NSPSSTPTSP…THSGSADAAG (96 aa). Residues 105–128 show a composition bias toward low complexity; sequence SPSSPSSTSPWSFNNCINGNNGNN. Positions 141-154 are enriched in polar residues; sequence PFSSHQSNGLSATH. The segment at 232–254 adopts a C3H1-type zinc-finger fold; sequence PCVYFSRGLCKNGESCKFIHGGY. Residues 357–433 form the RRM domain; it reads RQIYLTFPAD…RVLVKPYKEK (77 aa). A disordered region spans residues 566 to 650; the sequence is PVVNPMSVNN…PPVTTNNLMQ (85 aa). Basic and acidic residues predominate over residues 581–590; the sequence is AKEETNKSEL.

The protein is Zinc finger CCCH domain-containing protein 55 of Arabidopsis thaliana (Mouse-ear cress).